The sequence spans 512 residues: Maturase K (512 aa).

The protein belongs to the intron maturase 2 family. MatK subfamily.

The protein localises to the plastid. It is found in the chloroplast. Functionally, usually encoded in the trnK tRNA gene intron. Probably assists in splicing its own and other chloroplast group II introns. The polypeptide is Maturase K (Daucus carota (Wild carrot)).